The following is a 517-amino-acid chain: GMP synthase [glutamine-hydrolyzing] (517 aa).

A Glutamine amidotransferase type-1 domain is found at 11 to 202 (KIIVLDYGSQ…AFDICKAEAN (192 aa)). The active-site Nucleophile is the cysteine 88. Residues histidine 176 and glutamate 178 contribute to the active site. The GMPS ATP-PPase domain occupies 203 to 392 (WSMDDFITKQ…LGMPHALVWR (190 aa)). 230-236 (SGGVDSS) contacts ATP.

In terms of assembly, homodimer.

It catalyses the reaction XMP + L-glutamine + ATP + H2O = GMP + L-glutamate + AMP + diphosphate + 2 H(+). It functions in the pathway purine metabolism; GMP biosynthesis; GMP from XMP (L-Gln route): step 1/1. In terms of biological role, catalyzes the synthesis of GMP from XMP. In Lacticaseibacillus casei (strain BL23) (Lactobacillus casei), this protein is GMP synthase [glutamine-hydrolyzing].